Here is a 255-residue protein sequence, read N- to C-terminus: 5-oxoprolinase subunit A (255 aa).

This sequence belongs to the LamB/PxpA family. In terms of assembly, forms a complex composed of PxpA, PxpB and PxpC.

The catalysed reaction is 5-oxo-L-proline + ATP + 2 H2O = L-glutamate + ADP + phosphate + H(+). In terms of biological role, catalyzes the cleavage of 5-oxoproline to form L-glutamate coupled to the hydrolysis of ATP to ADP and inorganic phosphate. The sequence is that of 5-oxoprolinase subunit A from Nitrobacter hamburgensis (strain DSM 10229 / NCIMB 13809 / X14).